A 472-amino-acid chain; its full sequence is Cysteine--tRNA ligase (472 aa).

C28 is a binding site for Zn(2+). Residues 30–40 (PTVYNYIHIGN) carry the 'HIGH' region motif. Residues C212, H237, and E241 each contribute to the Zn(2+) site. A 'KMSKS' region motif is present at residues 271–275 (KMSKS). K274 lines the ATP pocket.

The protein belongs to the class-I aminoacyl-tRNA synthetase family. Monomer. Requires Zn(2+) as cofactor.

Its subcellular location is the cytoplasm. It carries out the reaction tRNA(Cys) + L-cysteine + ATP = L-cysteinyl-tRNA(Cys) + AMP + diphosphate. This Limosilactobacillus fermentum (strain NBRC 3956 / LMG 18251) (Lactobacillus fermentum) protein is Cysteine--tRNA ligase.